The following is a 414-amino-acid chain: MDFEVDYEGGNNTVNLQFDLKAQTSNFLNLQELQNSFNGNDLNTQLFWKPLINKLVDKNQNDLTSIAKTAVSDSLFLSNTNIFNSVLKIDEQLDLAKTKFEKEIIEPFKKEREKAKADYEEQQRILAEERRKQEEELKRKEEEAKRLKEQQEQFNKSFENAKEFKDYWKNQKKDVTDKTQLIDALKTSFAADKNKTFSLLINSFTKATSDYYKNNKKDESENAKKAFSEKGIQFPRQGLEGLYMSDWLRGKLTSYTDIKLNLTSIKIENKENNPTIDWKNNGIEFRQHYPYKFKFEIDIKYQGGYKLTGLFSWFAPFSGIPSSWNGEMDVKFIVDGDLDYNLVQNTDYPGSLFQFKDNQLLFTLHVKEQIKVQDGKFMDLLKQQNLHNLDLRNGATKPPVVDLASYLHYLVLNS.

It belongs to the MG032/MG096/MG288 family.

This is an uncharacterized protein from Mycoplasma genitalium (strain ATCC 33530 / DSM 19775 / NCTC 10195 / G37) (Mycoplasmoides genitalium).